The primary structure comprises 200 residues: Ribonuclease T2 (200 aa).

Cysteine 17 and cysteine 22 are disulfide-bonded. Histidine 32 is an active-site residue. A disulfide bond links cysteine 42 and cysteine 89. 2 N-linked (GlcNAc...) asparagine glycosylation sites follow: asparagine 43 and asparagine 73. Active-site residues include glutamate 82 and histidine 86. Asparagine 116 is a glycosylation site (N-linked (GlcNAc...) asparagine). 2 cysteine pairs are disulfide-bonded: cysteine 152–cysteine 188 and cysteine 170–cysteine 180.

It belongs to the RNase T2 family.

Its subcellular location is the secreted. The protein resides in the lysosome lumen. It localises to the endoplasmic reticulum lumen. It is found in the mitochondrion intermembrane space. It carries out the reaction a ribonucleotidyl-ribonucleotide-RNA + H2O = a 3'-end 3'-phospho-ribonucleotide-RNA + a 5'-end dephospho-ribonucleoside-RNA + H(+). It catalyses the reaction an adenylyl-uridine-RNA = a 3'-end 2',3'-cyclophospho-AMP-RNA + a 5'-end dephospho-uridine-RNA. The enzyme catalyses a guanylyl-uridine-RNA = a 3'-end 2',3'-cyclophospho-GMP-RNA + a 5'-end dephospho-uridine-RNA. Inhibited by Zn(2+) and Cu(2+). Its function is as follows. Ribonuclease that plays an essential role in innate immune response by recognizing and degrading RNAs from microbial pathogens that are subsequently sensed by TLR8. Cleaves preferentially single-stranded RNA molecules between purine and uridine residues, which critically contributes to the supply of catabolic uridine and the generation of purine-2',3'-cyclophosphate-terminated oligoribonucleotides. In turn, RNase T2 degradation products promote the RNA-dependent activation of TLR8. In plasmacytoid dendritic cells, it cooperates with PLD3 or PLD4 5'-&gt;3' exonucleases to process RNA fragments and release 2',3'-cyclic guanosine monophosphate (2',3'-cGMP), a potent stimulatory ligand for TLR7. Also plays a key role in degradation of mitochondrial RNA and processing of non-coding RNA imported from the cytosol into mitochondria. Participates as well in degradation of mitochondrion-associated cytosolic rRNAs. The sequence is that of Ribonuclease T2 (RNASET2) from Sus scrofa (Pig).